The primary structure comprises 507 residues: Alkyl hydroperoxide reductase subunit F (507 aa).

Residue 207–222 (DVLIVGGGPASGSAAI) participates in FAD binding. A disulfide bond links Cys335 and Cys338. 347-361 (DVAVIGGGNSGVEAA) is an NAD(+) binding site. FAD is bound at residue 467 to 477 (TNVPGIFAAGD).

This sequence belongs to the class-II pyridine nucleotide-disulfide oxidoreductase family. In terms of assembly, homodimer. FAD is required as a cofactor.

Its function is as follows. Serves to protect the cell against DNA damage by alkyl hydroperoxides. It can use either NADH or NADPH as electron donor for direct reduction of redox dyes or of alkyl hydroperoxides when combined with the AhpC protein. In Staphylococcus aureus (strain MRSA252), this protein is Alkyl hydroperoxide reductase subunit F (ahpF).